Here is a 168-residue protein sequence, read N- to C-terminus: Photosystem I assembly protein Ycf3 (168 aa).

3 TPR repeats span residues 35-68 (AFTY…EIDP), 72-105 (SYIL…NPFL), and 120-153 (GEQA…TPGN).

It belongs to the Ycf3 family.

It is found in the plastid. The protein resides in the chloroplast thylakoid membrane. In terms of biological role, essential for the assembly of the photosystem I (PSI) complex. May act as a chaperone-like factor to guide the assembly of the PSI subunits. The chain is Photosystem I assembly protein Ycf3 from Lactuca sativa (Garden lettuce).